Here is a 295-residue protein sequence, read N- to C-terminus: Protease HtpX (295 aa).

The next 2 membrane-spanning stretches (helical) occupy residues 4–24 (ILLFLATNLAVVLIASITLSL) and 42–62 (QLLVFCAVFGFAGSLFSLFIS). Zn(2+) is bound at residue histidine 147. Glutamate 148 is a catalytic residue. Residue histidine 151 coordinates Zn(2+). A run of 2 helical transmembrane segments spans residues 158–178 (VTLALVQGVVNTFVMFFARII) and 199–219 (ITTIFAELVLGFLASAIVMWF). Glutamate 224 serves as a coordination point for Zn(2+).

Belongs to the peptidase M48B family. Requires Zn(2+) as cofactor.

The protein resides in the cell inner membrane. The chain is Protease HtpX from Pseudomonas savastanoi pv. phaseolicola (strain 1448A / Race 6) (Pseudomonas syringae pv. phaseolicola (strain 1448A / Race 6)).